A 111-amino-acid polypeptide reads, in one-letter code: Nucleoid-associated protein lhv_0401 (111 aa).

Belongs to the YbaB/EbfC family. As to quaternary structure, homodimer.

The protein localises to the cytoplasm. Its subcellular location is the nucleoid. Its function is as follows. Binds to DNA and alters its conformation. May be involved in regulation of gene expression, nucleoid organization and DNA protection. The sequence is that of Nucleoid-associated protein lhv_0401 from Lactobacillus helveticus (strain DPC 4571).